The primary structure comprises 394 residues: Elongation factor Tu (394 aa).

One can recognise a tr-type G domain in the interval 10–204; sequence KPHINVGTIG…AMDNYIPIPE (195 aa). The segment at 19–26 is G1; the sequence is GHVDHGKT. A GTP-binding site is contributed by 19–26; that stretch reads GHVDHGKT. Thr26 lines the Mg(2+) pocket. A G2 region spans residues 60–64; the sequence is GITIN. Residues 81 to 84 are G3; it reads DCPG. GTP is bound by residues 81-85 and 136-139; these read DCPGH and NKVD. Positions 136-139 are G4; that stretch reads NKVD. Residues 174–176 form a G5 region; sequence SAL.

Belongs to the TRAFAC class translation factor GTPase superfamily. Classic translation factor GTPase family. EF-Tu/EF-1A subfamily. In terms of assembly, monomer.

It is found in the cytoplasm. The catalysed reaction is GTP + H2O = GDP + phosphate + H(+). GTP hydrolase that promotes the GTP-dependent binding of aminoacyl-tRNA to the A-site of ribosomes during protein biosynthesis. This Methylacidiphilum infernorum (isolate V4) (Methylokorus infernorum (strain V4)) protein is Elongation factor Tu.